Reading from the N-terminus, the 356-residue chain is tRNA N6-adenosine threonylcarbamoyltransferase (356 aa).

2 residues coordinate Fe cation: H131 and H135. Substrate-binding positions include 154–158, D187, G200, and N289; that span reads LVSGG. A Fe cation-binding site is contributed by D317.

It belongs to the KAE1 / TsaD family. The cofactor is Fe(2+).

It localises to the cytoplasm. It carries out the reaction L-threonylcarbamoyladenylate + adenosine(37) in tRNA = N(6)-L-threonylcarbamoyladenosine(37) in tRNA + AMP + H(+). In terms of biological role, required for the formation of a threonylcarbamoyl group on adenosine at position 37 (t(6)A37) in tRNAs that read codons beginning with adenine. Is involved in the transfer of the threonylcarbamoyl moiety of threonylcarbamoyl-AMP (TC-AMP) to the N6 group of A37, together with TsaE and TsaB. TsaD likely plays a direct catalytic role in this reaction. This is tRNA N6-adenosine threonylcarbamoyltransferase from Ruthia magnifica subsp. Calyptogena magnifica.